The chain runs to 371 residues: Surface protein P12p (371 aa).

An N-terminal signal peptide occupies residues M1–C20. 6-Cys domains are found at residues I23–N168 and I169–Q343. Intrachain disulfides connect C27-C62, C76-C144, C93-C142, and C173-C245. N184 is a glycosylation site (N-linked (GlcNAc...) asparagine). A disordered region spans residues G202–N239. A compositionally biased stretch (acidic residues) spans N206 to N216. The segment covering N217–N239 has biased composition (low complexity). 2 N-linked (GlcNAc...) asparagine glycosylation sites follow: N242 and N246. 2 cysteine pairs are disulfide-bonded: C260/C323 and C271/C321.

Its subcellular location is the cell surface. It localises to the cell membrane. The chain is Surface protein P12p (PFS12P) from Plasmodium falciparum (isolate 3D7).